Here is a 183-residue protein sequence, read N- to C-terminus: NADH-quinone oxidoreductase subunit B 2 (183 aa).

Residues C47, C48, C113, and C142 each coordinate [4Fe-4S] cluster.

This sequence belongs to the complex I 20 kDa subunit family. NDH-1 is composed of 14 different subunits. Subunits NuoB, C, D, E, F, and G constitute the peripheral sector of the complex. [4Fe-4S] cluster is required as a cofactor.

Its subcellular location is the cell inner membrane. The enzyme catalyses a quinone + NADH + 5 H(+)(in) = a quinol + NAD(+) + 4 H(+)(out). Its function is as follows. NDH-1 shuttles electrons from NADH, via FMN and iron-sulfur (Fe-S) centers, to quinones in the respiratory chain. The immediate electron acceptor for the enzyme in this species is believed to be ubiquinone. Couples the redox reaction to proton translocation (for every two electrons transferred, four hydrogen ions are translocated across the cytoplasmic membrane), and thus conserves the redox energy in a proton gradient. The sequence is that of NADH-quinone oxidoreductase subunit B 2 from Anaeromyxobacter sp. (strain Fw109-5).